We begin with the raw amino-acid sequence, 638 residues long: Ubiquitin-like-specific protease 2 (638 aa).

Residues 1-12 are compositionally biased toward basic and acidic residues; it reads MRDSKDALDDKS. Disordered regions lie at residues 1–79 and 238–314; these read MRDS…PKHL and PQKT…TSND. Residues 238–249 are compositionally biased toward polar residues; sequence PQKTVRSIVKQT. Positions 250–264 are enriched in low complexity; sequence SSPHSSKMPKHSLPS. Over residues 267–314 the composition is skewed to polar residues; the sequence is TPFNSNSGDSLLSRIKNSNQSSSERPTANNGAQEQNQSSSSAGNTSND. Catalysis depends on residues His-440 and Asp-494. Thr-526 is subject to Phosphothreonine. Residue Cys-544 is part of the active site. The segment covering 610–619 has biased composition (polar residues); sequence NERQSLSSGS. Residues 610–638 form a disordered region; it reads NERQSLSSGSNDEEDKENDDDLAILPITN. A compositionally biased stretch (acidic residues) spans 620–631; it reads NDEEDKENDDDL.

This sequence belongs to the peptidase C48 family.

Its subcellular location is the nucleus. The chain is Ubiquitin-like-specific protease 2 (ulp2) from Schizosaccharomyces pombe (strain 972 / ATCC 24843) (Fission yeast).